Reading from the N-terminus, the 569-residue chain is Adenine deaminase 1 (569 aa).

It belongs to the metallo-dependent hydrolases superfamily. Adenine deaminase family. Mn(2+) is required as a cofactor.

The enzyme catalyses adenine + H2O + H(+) = hypoxanthine + NH4(+). The protein is Adenine deaminase 1 of Rhizobium johnstonii (strain DSM 114642 / LMG 32736 / 3841) (Rhizobium leguminosarum bv. viciae).